The sequence spans 435 residues: Methylenetetrahydrofolate--tRNA-(uracil-5-)-methyltransferase TrmFO (435 aa).

10-15 (GAGLAG) lines the FAD pocket.

It belongs to the MnmG family. TrmFO subfamily. In terms of assembly, homodimer. FAD serves as cofactor.

It localises to the cytoplasm. It carries out the reaction uridine(54) in tRNA + (6R)-5,10-methylene-5,6,7,8-tetrahydrofolate + NADH + H(+) = 5-methyluridine(54) in tRNA + (6S)-5,6,7,8-tetrahydrofolate + NAD(+). It catalyses the reaction uridine(54) in tRNA + (6R)-5,10-methylene-5,6,7,8-tetrahydrofolate + NADPH + H(+) = 5-methyluridine(54) in tRNA + (6S)-5,6,7,8-tetrahydrofolate + NADP(+). Catalyzes the folate-dependent formation of 5-methyl-uridine at position 54 (M-5-U54) in all tRNAs. The sequence is that of Methylenetetrahydrofolate--tRNA-(uracil-5-)-methyltransferase TrmFO from Bacillus subtilis (strain 168).